Consider the following 117-residue polypeptide: Hydrogenase maturation factor HypA (117 aa).

Ni(2+) is bound at residue His-2. Zn(2+) contacts are provided by Cys-73, Cys-76, Cys-89, and Cys-92.

It belongs to the HypA/HybF family.

Its function is as follows. Involved in the maturation of [NiFe] hydrogenases. Required for nickel insertion into the metal center of the hydrogenase. The chain is Hydrogenase maturation factor HypA from Pelodictyon phaeoclathratiforme (strain DSM 5477 / BU-1).